The following is a 176-amino-acid chain: Ribosome maturation factor RimP (176 aa).

The protein belongs to the RimP family.

The protein resides in the cytoplasm. In terms of biological role, required for maturation of 30S ribosomal subunits. This Mycolicibacterium vanbaalenii (strain DSM 7251 / JCM 13017 / BCRC 16820 / KCTC 9966 / NRRL B-24157 / PYR-1) (Mycobacterium vanbaalenii) protein is Ribosome maturation factor RimP.